The chain runs to 418 residues: Gamma-glutamyl phosphate reductase (418 aa).

Belongs to the gamma-glutamyl phosphate reductase family.

The protein resides in the cytoplasm. It carries out the reaction L-glutamate 5-semialdehyde + phosphate + NADP(+) = L-glutamyl 5-phosphate + NADPH + H(+). Its pathway is amino-acid biosynthesis; L-proline biosynthesis; L-glutamate 5-semialdehyde from L-glutamate: step 2/2. In terms of biological role, catalyzes the NADPH-dependent reduction of L-glutamate 5-phosphate into L-glutamate 5-semialdehyde and phosphate. The product spontaneously undergoes cyclization to form 1-pyrroline-5-carboxylate. The protein is Gamma-glutamyl phosphate reductase of Thermodesulfovibrio yellowstonii (strain ATCC 51303 / DSM 11347 / YP87).